Consider the following 85-residue polypeptide: Large ribosomal subunit protein bL27 (85 aa).

Residues Met1–Leu21 form a disordered region.

This sequence belongs to the bacterial ribosomal protein bL27 family.

This is Large ribosomal subunit protein bL27 from Pseudomonas entomophila (strain L48).